The chain runs to 286 residues: ATP synthase gamma chain (286 aa).

It belongs to the ATPase gamma chain family. In terms of assembly, F-type ATPases have 2 components, CF(1) - the catalytic core - and CF(0) - the membrane proton channel. CF(1) has five subunits: alpha(3), beta(3), gamma(1), delta(1), epsilon(1). CF(0) has three main subunits: a, b and c.

The protein localises to the cell membrane. Its function is as follows. Produces ATP from ADP in the presence of a proton gradient across the membrane. The gamma chain is believed to be important in regulating ATPase activity and the flow of protons through the CF(0) complex. The protein is ATP synthase gamma chain of Malacoplasma penetrans (strain HF-2) (Mycoplasma penetrans).